Reading from the N-terminus, the 432-residue chain is 3-phosphoshikimate 1-carboxyvinyltransferase (432 aa).

Residues Lys22, Ser23, and Arg27 each coordinate 3-phosphoshikimate. Lys22 contacts phosphoenolpyruvate. The phosphoenolpyruvate site is built by Gly96 and Arg127. Residues Ser173, Ser174, Gln175, Ser201, Asp316, Asn339, and Lys343 each coordinate 3-phosphoshikimate. Residue Gln175 participates in phosphoenolpyruvate binding. Asp316 acts as the Proton acceptor in catalysis. The phosphoenolpyruvate site is built by Arg347, Arg391, and Lys416.

The protein belongs to the EPSP synthase family. As to quaternary structure, monomer.

The protein resides in the cytoplasm. The catalysed reaction is 3-phosphoshikimate + phosphoenolpyruvate = 5-O-(1-carboxyvinyl)-3-phosphoshikimate + phosphate. Its pathway is metabolic intermediate biosynthesis; chorismate biosynthesis; chorismate from D-erythrose 4-phosphate and phosphoenolpyruvate: step 6/7. Catalyzes the transfer of the enolpyruvyl moiety of phosphoenolpyruvate (PEP) to the 5-hydroxyl of shikimate-3-phosphate (S3P) to produce enolpyruvyl shikimate-3-phosphate and inorganic phosphate. In Haemophilus influenzae (strain ATCC 51907 / DSM 11121 / KW20 / Rd), this protein is 3-phosphoshikimate 1-carboxyvinyltransferase.